Reading from the N-terminus, the 168-residue chain is Transcriptional regulator MraZ (168 aa).

SpoVT-AbrB domains lie at 8–51 and 90–140; these read EYNQ…GGDR and ALNM…KADI.

Belongs to the MraZ family. In terms of assembly, forms oligomers.

It is found in the cytoplasm. The protein localises to the nucleoid. The chain is Transcriptional regulator MraZ from Cereibacter sphaeroides (strain KD131 / KCTC 12085) (Rhodobacter sphaeroides).